The primary structure comprises 912 residues: Vomeronasal type-2 receptor 1 (912 aa).

An N-terminal signal peptide occupies residues 1-21 (MASRQISLALGFLAFLWAVLG). Over 22–623 (AQNKTEEVQC…LAYGEALGFT (602 aa)) the chain is Extracellular. 4 N-linked (GlcNAc...) asparagine glycosylation sites follow: Asn-24, Asn-38, Asn-299, and Asn-386. Residues 624–644 (LVILSIFGALVVLAVTVVYVI) traverse the membrane as a helical segment. Over 645 to 657 (HRHTPLVKANDRE) the chain is Cytoplasmic. The helical transmembrane segment at 658–678 (LSFLIQMSLVITVLSSLLFIG) threads the bilayer. Residues 679 to 691 (KPCNWSCMARQIT) lie on the Extracellular side of the membrane. The helical transmembrane segment at 692 to 712 (LALGFCLCLSSILGKTISLFF) threads the bilayer. The Cytoplasmic segment spans residues 713-732 (AYRISVSKTRLISMHPIFRK). A helical transmembrane segment spans residues 733 to 753 (LIVLVCVVGEIGVCAAYLVLE). The Extracellular segment spans residues 754 to 778 (PPRMFKNIEIQNVKIIFECNEGSVE). The helical transmembrane segment at 779 to 799 (FLCSIFGFDVLRALLCFLTTF) threads the bilayer. The Cytoplasmic segment spans residues 800–812 (VARQLPDNYYEGK). Residues 813-833 (CITFGMLVFFIVWISFVPAYL) form a helical membrane-spanning segment. Residues 834–840 (STKGKFK) lie on the Extracellular side of the membrane. Residues 841–861 (VAVEIFAILASSYGLLGCLFL) form a helical membrane-spanning segment. Topologically, residues 862 to 912 (PKCFIILLRPKRNTDETVGGRVPTVDRSIQLTSASVSSELNSTTVSTVLDE) are cytoplasmic.

This sequence belongs to the G-protein coupled receptor 3 family. Expressed at the sensory surface of the vomeronasal organ.

The protein localises to the cell membrane. Putative pheromone receptor. In Mus musculus (Mouse), this protein is Vomeronasal type-2 receptor 1 (Vmn2r1).